The primary structure comprises 132 residues: Small ribosomal subunit protein uS8 (132 aa).

Belongs to the universal ribosomal protein uS8 family. As to quaternary structure, part of the 30S ribosomal subunit. Contacts proteins S5 and S12.

Its function is as follows. One of the primary rRNA binding proteins, it binds directly to 16S rRNA central domain where it helps coordinate assembly of the platform of the 30S subunit. This chain is Small ribosomal subunit protein uS8, found in Brucella anthropi (strain ATCC 49188 / DSM 6882 / CCUG 24695 / JCM 21032 / LMG 3331 / NBRC 15819 / NCTC 12168 / Alc 37) (Ochrobactrum anthropi).